We begin with the raw amino-acid sequence, 307 residues long: Cilia-and flagella-associated protein 96 (307 aa).

Disordered stretches follow at residues 73 to 102 and 218 to 279; these read YSDP…SSGE and HSQK…GPKT.

This sequence belongs to the CFAP96 family.

The protein resides in the cytoplasm. It localises to the cytoskeleton. The protein localises to the microtubule organizing center. Its subcellular location is the centrosome. In Xenopus laevis (African clawed frog), this protein is Cilia-and flagella-associated protein 96 (cfap96.L).